Consider the following 322-residue polypeptide: tRNA-dihydrouridine(16) synthase (322 aa).

FMN is bound by residues 7-9 (PME) and Gln-68. The active-site Proton donor is the Cys-98. FMN-binding positions include Lys-139, 200 to 202 (NGE), and 224 to 225 (CR).

The protein belongs to the Dus family. DusC subfamily. Requires FMN as cofactor.

The enzyme catalyses 5,6-dihydrouridine(16) in tRNA + NADP(+) = uridine(16) in tRNA + NADPH + H(+). It catalyses the reaction 5,6-dihydrouridine(16) in tRNA + NAD(+) = uridine(16) in tRNA + NADH + H(+). Functionally, catalyzes the synthesis of 5,6-dihydrouridine (D), a modified base found in the D-loop of most tRNAs, via the reduction of the C5-C6 double bond in target uridines. Specifically modifies U16 in tRNAs. The chain is tRNA-dihydrouridine(16) synthase from Vibrio parahaemolyticus serotype O3:K6 (strain RIMD 2210633).